A 157-amino-acid chain; its full sequence is Protein Smg homolog (157 aa).

This sequence belongs to the Smg family.

The sequence is that of Protein Smg homolog from Xanthomonas campestris pv. campestris (strain 8004).